The sequence spans 180 residues: E3 ubiquitin-protein ligase RNF5 (180 aa).

Residue Ala2 is modified to N-acetylalanine. The RING-type zinc finger occupies 27 to 68 (CNICLETAREAVVSVCGHLYCWPCLHQWLETRPERQECPVCK). The disordered stretch occupies residues 79–110 (LYGRGSQKPQDPRLKTPPRPQGQRPAPESRGG). Residue Ser84 is modified to Phosphoserine. Thr94 carries the phosphothreonine modification. Ser107 carries the phosphoserine modification. Helical transmembrane passes span 118–138 (GGFH…TTVF) and 160–180 (SWQD…LLSI).

It belongs to the RNF5 family. In terms of assembly, interacts with PXN. Interacts with Salmonella typhimurium sopA. Interacts with JKAMP. Interacts with STING1; the interaction of endogenous proteins is dependent on viral infection. Widely expressed.

It is found in the cell membrane. The protein resides in the mitochondrion membrane. Its subcellular location is the endoplasmic reticulum membrane. The enzyme catalyses S-ubiquitinyl-[E2 ubiquitin-conjugating enzyme]-L-cysteine + [acceptor protein]-L-lysine = [E2 ubiquitin-conjugating enzyme]-L-cysteine + N(6)-ubiquitinyl-[acceptor protein]-L-lysine.. Its pathway is protein modification; protein ubiquitination. Its function is as follows. Membrane-bound E3 ubiquitin-protein ligase that mediates ubiquitination of target proteins. May function together with E2 ubiquitin-conjugating enzymes UBE2D1/UBCH5A and UBE2D2/UBC4. Mediates ubiquitination of PXN/paxillin,thereby regulating cell motility and localization of PXN/paxillin. Catalyzes ubiquitination of Salmonella type III secreted protein sopA. Mediates the 'Lys-63'-linked polyubiquitination of JKAMP thereby regulating JKAMP function by decreasing its association with components of the proteasome and ERAD; the ubiquitination appears to involve E2 ubiquitin-conjugating enzyme UBE2N. Mediates the 'Lys-48'-linked polyubiquitination of STING1 at 'Lys-150' leading to its proteasomal degradation; the ubiquitination occurs in mitochondria after viral transfection and regulates antiviral responses. Catalyzes ubiquitination and subsequent degradation of ATG4B, thereby inhibiting autophagy. This Homo sapiens (Human) protein is E3 ubiquitin-protein ligase RNF5.